We begin with the raw amino-acid sequence, 287 residues long: ATP synthase gamma chain (287 aa).

Belongs to the ATPase gamma chain family. F-type ATPases have 2 components, CF(1) - the catalytic core - and CF(0) - the membrane proton channel. CF(1) has five subunits: alpha(3), beta(3), gamma(1), delta(1), epsilon(1). CF(0) has three main subunits: a, b and c.

It is found in the cell inner membrane. Its function is as follows. Produces ATP from ADP in the presence of a proton gradient across the membrane. The gamma chain is believed to be important in regulating ATPase activity and the flow of protons through the CF(0) complex. The chain is ATP synthase gamma chain from Xanthomonas campestris pv. campestris (strain B100).